We begin with the raw amino-acid sequence, 478 residues long: ATP synthase subunit beta (478 aa).

151–158 (GGAGVGKT) contacts ATP.

It belongs to the ATPase alpha/beta chains family. As to quaternary structure, F-type ATPases have 2 components, CF(1) - the catalytic core - and CF(0) - the membrane proton channel. CF(1) has five subunits: alpha(3), beta(3), gamma(1), delta(1), epsilon(1). CF(0) has three main subunits: a(1), b(2) and c(9-12). The alpha and beta chains form an alternating ring which encloses part of the gamma chain. CF(1) is attached to CF(0) by a central stalk formed by the gamma and epsilon chains, while a peripheral stalk is formed by the delta and b chains.

It is found in the cell inner membrane. The enzyme catalyses ATP + H2O + 4 H(+)(in) = ADP + phosphate + 5 H(+)(out). In terms of biological role, produces ATP from ADP in the presence of a proton gradient across the membrane. The catalytic sites are hosted primarily by the beta subunits. The polypeptide is ATP synthase subunit beta (Azorhizobium caulinodans (strain ATCC 43989 / DSM 5975 / JCM 20966 / LMG 6465 / NBRC 14845 / NCIMB 13405 / ORS 571)).